Reading from the N-terminus, the 114-residue chain is Probable 4-amino-4-deoxy-L-arabinose-phosphoundecaprenol flippase subunit ArnE (114 aa).

Helical transmembrane passes span 41-61, 64-84, and 94-114; these read PWLIASVAALGCGMLLWIYLL, LPLSMAYPMLSINLVLVLVGS, and YHNWLGVGAIIVGALLLGGLL. In terms of domain architecture, EamA spans 43–112; the sequence is LIASVAALGC…IIVGALLLGG (70 aa).

It belongs to the ArnE family. In terms of assembly, heterodimer of ArnE and ArnF.

Its subcellular location is the cell inner membrane. It functions in the pathway bacterial outer membrane biogenesis; lipopolysaccharide biosynthesis. In terms of biological role, translocates 4-amino-4-deoxy-L-arabinose-phosphoundecaprenol (alpha-L-Ara4N-phosphoundecaprenol) from the cytoplasmic to the periplasmic side of the inner membrane. The protein is Probable 4-amino-4-deoxy-L-arabinose-phosphoundecaprenol flippase subunit ArnE of Aeromonas hydrophila subsp. hydrophila (strain ATCC 7966 / DSM 30187 / BCRC 13018 / CCUG 14551 / JCM 1027 / KCTC 2358 / NCIMB 9240 / NCTC 8049).